Consider the following 435-residue polypeptide: WD repeat domain phosphoinositide-interacting protein 2 (435 aa).

Residues 182–222 (AHDSPLAALAFDASGTKLATASEKGTVIRVFSIPEGQKLFE) form a WD 1 repeat. Residues 223–226 (FRRG) carry the L/FRRG motif motif. WD repeat units lie at residues 228-267 (KRCV…EKPP) and 311-349 (GHKN…GGEC). The interval 386–435 (VTKTYPPPSPTRHAYADDLGAVGGASEEDEMGNLRLDEDNENPPMILQTE) is disordered.

Belongs to the WD repeat PROPPIN family.

Its subcellular location is the preautophagosomal structure membrane. Functionally, component of the autophagy machinery that controls the major intracellular degradation process by which cytoplasmic materials are packaged into autophagosomes and delivered to lysosomes for degradation. Involved in an early step of the formation of preautophagosomal structures. In Xenopus laevis (African clawed frog), this protein is WD repeat domain phosphoinositide-interacting protein 2 (wipi2).